Here is a 404-residue protein sequence, read N- to C-terminus: DNA gyrase subunit B (404 aa).

The Toprim domain maps to 321 to 404 (SEIYIVEGDS…VIIMTDADVD (84 aa)). The Mg(2+) site is built by E327, D400, and D402.

The protein belongs to the type II topoisomerase GyrB family. Heterotetramer, composed of two GyrA and two GyrB chains. In the heterotetramer, GyrA contains the active site tyrosine that forms a transient covalent intermediate with DNA, while GyrB binds cofactors and catalyzes ATP hydrolysis. It depends on Mg(2+) as a cofactor. Mn(2+) is required as a cofactor. The cofactor is Ca(2+).

The protein localises to the cytoplasm. It catalyses the reaction ATP-dependent breakage, passage and rejoining of double-stranded DNA.. In terms of biological role, a type II topoisomerase that negatively supercoils closed circular double-stranded (ds) DNA in an ATP-dependent manner to modulate DNA topology and maintain chromosomes in an underwound state. Negative supercoiling favors strand separation, and DNA replication, transcription, recombination and repair, all of which involve strand separation. Also able to catalyze the interconversion of other topological isomers of dsDNA rings, including catenanes and knotted rings. Type II topoisomerases break and join 2 DNA strands simultaneously in an ATP-dependent manner. The protein is DNA gyrase subunit B (gyrB) of Bacillus mycoides.